We begin with the raw amino-acid sequence, 342 residues long: Cathepsin B-like cysteine proteinase (342 aa).

Residues 1 to 17 form the signal peptide; sequence MLKIAVYIVSLFTFLEA. Positions 18–89 are cleaved as a propeptide — activation peptide; sequence HVTTRNNQRI…TVDHHDLNVE (72 aa). 6 disulfide bridges follow: Cys-103–Cys-132, Cys-115–Cys-159, Cys-151–Cys-217, Cys-152–Cys-155, Cys-188–Cys-221, and Cys-196–Cys-207. Cys-118 is an active-site residue. Residues His-288 and Asn-308 contribute to the active site.

This sequence belongs to the peptidase C1 family. In terms of tissue distribution, intestine (gut).

Functionally, thiol protease. Has a role as a digestive enzyme. The protein is Cathepsin B-like cysteine proteinase (CATB) of Schistosoma japonicum (Blood fluke).